A 388-amino-acid polypeptide reads, in one-letter code: Diphosphomevalonate decarboxylase (388 aa).

(R)-5-diphosphomevalonate is bound by residues 19 to 22, arginine 74, 153 to 158, and threonine 209; these read YWGK and SGSACR. Residues 367–388 form a disordered region; sequence QGPQGSSESLINDKGLPKAVAN.

It belongs to the diphosphomevalonate decarboxylase family. In terms of assembly, homodimer.

It carries out the reaction (R)-5-diphosphomevalonate + ATP = isopentenyl diphosphate + ADP + phosphate + CO2. Its pathway is isoprenoid biosynthesis; isopentenyl diphosphate biosynthesis via mevalonate pathway; isopentenyl diphosphate from (R)-mevalonate: step 3/3. Diphosphomevalonate decarboxylase; part of the second module of ergosterol biosynthesis pathway that includes the middle steps of the pathway. The second module is carried out in the vacuole and involves the formation of farnesyl diphosphate, which is also an important intermediate in the biosynthesis of ubiquinone, dolichol, heme and prenylated proteins. Activity by the mevalonate kinase ERG12 first converts mevalonate into 5-phosphomevalonate. 5-phosphomevalonate is then further converted to 5-diphosphomevalonate by the phosphomevalonate kinase ERG8. The diphosphomevalonate decarboxylase MVD1/ERG19 then produces isopentenyl diphosphate. The isopentenyl-diphosphate delta-isomerase IDI1 then catalyzes the 1,3-allylic rearrangement of the homoallylic substrate isopentenyl (IPP) to its highly electrophilic allylic isomer, dimethylallyl diphosphate (DMAPP). Finally the farnesyl diphosphate synthase ERG20 catalyzes the sequential condensation of isopentenyl pyrophosphate with dimethylallyl pyrophosphate, and then with the resultant geranylpyrophosphate to the ultimate product farnesyl pyrophosphate. The sequence is that of Diphosphomevalonate decarboxylase from Debaryomyces hansenii (strain ATCC 36239 / CBS 767 / BCRC 21394 / JCM 1990 / NBRC 0083 / IGC 2968) (Yeast).